The sequence spans 165 residues: Fibrinogen-binding protein (165 aa).

Positions 1–29 (MKNKLIAKSLLTLAAIGITTTTIASTADA) are cleaved as a signal peptide.

Interacts with host fibrinogen alpha chain/FGA. Interacts with host complement protein C3.

It is found in the secreted. Its function is as follows. Extracellular fibrinogen-binding protein that plays an important role in virulence. By interacting with the alpha chain of fibrinogen and its derivative fibrin, enhances a non-functional interaction between fibrinogen and platelets and is responsible for repression of fibrinogen-dependent platelet aggregation. In addition, assembles a fibrinogen protective shield around the bacteria which results in impaired phagocytic clearance by the host. Mechanistically, interacts with host complement C3b deposited on the surface of the bacterium via its C-terminal and then recruits fibrinogen via its N-terminal. The polypeptide is Fibrinogen-binding protein (fib) (Staphylococcus aureus (strain Newman)).